Here is a 1873-residue protein sequence, read N- to C-terminus: Ankyrin repeat domain-containing protein 31 (1873 aa).

Disordered stretches follow at residues 1–27 (MEEG…SDLE) and 361–380 (EPLS…DQET). The segment covering 361 to 379 (EPLSNKRNSNSVTNSSDQE) has biased composition (polar residues). ANK repeat units follow at residues 488-517 (FGEN…NVNQ), 521-550 (AGWT…DVNI), and 554-583 (YQIT…DPLF). Positions 707 to 740 (TGLRKGNLHNVKDPNTNVPKGIGRRKTQHKRTQV) are disordered. Basic residues predominate over residues 728–737 (IGRRKTQHKR). ANK repeat units lie at residues 1154-1183 (RGES…DVNL), 1187-1216 (AGWT…KVNC), and 1220-1249 (DGIL…NPNQ). 4 disordered regions span residues 1242-1263 (QNGA…EADD), 1449-1482 (RSEI…SGSM), 1512-1549 (FSGN…PSQP), and 1606-1634 (CDQD…ASES). Over residues 1250-1263 (KDQKQKSALDEADD) the composition is skewed to basic and acidic residues. 2 stretches are compositionally biased toward polar residues: residues 1460–1482 (ELTS…SGSM) and 1515–1525 (NDMNSKQNGSD). Residues 1535–1544 (RHSDGTEKNK) are compositionally biased toward basic and acidic residues. Residues 1621–1632 (KTSSQQSPTGAS) show a composition bias toward polar residues. Residues 1683 to 1778 (KKALNYSTAP…TYLGKELLRY (96 aa)) enclose the RAMA domain.

In terms of assembly, interacts with REC114; the interaction is direct. Interacts with IHO1.

Its subcellular location is the nucleus. The protein resides in the chromosome. Required for DNA double-strand breaks (DSBs) formation during meiotic recombination. Regulates the spatial and temporal patterns of pre-DSB recombinosome assembly and recombination activity by acting as a scaffold that anchors REC114 and other factors to specific genomic locations, thereby regulating DSB formation. Plays a key role in recombination in the pseudoautosomal regions of sex chromosomes. In Homo sapiens (Human), this protein is Ankyrin repeat domain-containing protein 31.